A 246-amino-acid chain; its full sequence is tRNA (guanine-N(1)-)-methyltransferase (246 aa).

S-adenosyl-L-methionine-binding positions include G114 and 134-139 (IGDYIL).

This sequence belongs to the RNA methyltransferase TrmD family. As to quaternary structure, homodimer.

Its subcellular location is the cytoplasm. It carries out the reaction guanosine(37) in tRNA + S-adenosyl-L-methionine = N(1)-methylguanosine(37) in tRNA + S-adenosyl-L-homocysteine + H(+). Its function is as follows. Specifically methylates guanosine-37 in various tRNAs. This is tRNA (guanine-N(1)-)-methyltransferase from Coxiella burnetii (strain RSA 331 / Henzerling II).